The chain runs to 334 residues: Serine racemase (334 aa).

Position 13 (E13) interacts with Mg(2+). ATP-binding residues include S31, S32, I33, K51, and T52. Catalysis depends on proton acceptor residues K56 and S84. K56 bears the N6-(pyridoxal phosphate)lysine mark. Residue N86 coordinates pyridoxal 5'-phosphate. Q89 contacts ATP. C113 is modified (S-nitrosocysteine). Y121 lines the ATP pocket. Pyridoxal 5'-phosphate is bound at residue N154. D178 contributes to the Mg(2+) binding site. Residues G185, G186, G187, G188, and M189 each coordinate pyridoxal 5'-phosphate. Residues E210, A214, D216, and N247 each contribute to the Mg(2+) site. E210, A214, D216, and N247 together coordinate Ca(2+). Mn(2+) contacts are provided by E210, A214, and D216. K279 provides a ligand contact to ATP. S313 contributes to the pyridoxal 5'-phosphate binding site. Residue N316 participates in ATP binding.

This sequence belongs to the serine/threonine dehydratase family. As to quaternary structure, homodimer. Mg(2+) is required as a cofactor. It depends on Mn(2+) as a cofactor. Requires Ca(2+) as cofactor. Pyridoxal 5'-phosphate serves as cofactor. Post-translationally, S-nitrosylated, leading to decrease the enzyme activity.

The catalysed reaction is L-serine = D-serine. It catalyses the reaction L-serine = pyruvate + NH4(+). It carries out the reaction D-serine = pyruvate + NH4(+). In terms of biological role, catalyzes the synthesis of D-serine from L-serine. D-serine is a key coagonist with glutamate at NMDA receptors. Has dehydratase activity towards both L-serine and D-serine. The chain is Serine racemase (SRR) from Bos taurus (Bovine).